The chain runs to 178 residues: Probable inosine/xanthosine triphosphatase (178 aa).

This sequence belongs to the YjjX NTPase family. As to quaternary structure, homodimer. Requires Mg(2+) as cofactor. Mn(2+) serves as cofactor.

It carries out the reaction XTP + H2O = XDP + phosphate + H(+). The enzyme catalyses ITP + H2O = IDP + phosphate + H(+). Phosphatase that hydrolyzes non-canonical purine nucleotides such as XTP and ITP to their respective diphosphate derivatives. Probably excludes non-canonical purines from DNA/RNA precursor pool, thus preventing their incorporation into DNA/RNA and avoiding chromosomal lesions. The sequence is that of Probable inosine/xanthosine triphosphatase from Pyrobaculum aerophilum (strain ATCC 51768 / DSM 7523 / JCM 9630 / CIP 104966 / NBRC 100827 / IM2).